Consider the following 428-residue polypeptide: Enolase (428 aa).

A (2R)-2-phosphoglycerate-binding site is contributed by glutamine 162. Glutamate 204 serves as the catalytic Proton donor. Mg(2+) is bound by residues aspartate 241, glutamate 283, and aspartate 310. (2R)-2-phosphoglycerate-binding residues include lysine 335, arginine 364, serine 365, and lysine 386. Lysine 335 serves as the catalytic Proton acceptor.

It belongs to the enolase family. Requires Mg(2+) as cofactor.

Its subcellular location is the cytoplasm. It localises to the secreted. The protein resides in the cell surface. It catalyses the reaction (2R)-2-phosphoglycerate = phosphoenolpyruvate + H2O. Its pathway is carbohydrate degradation; glycolysis; pyruvate from D-glyceraldehyde 3-phosphate: step 4/5. In terms of biological role, catalyzes the reversible conversion of 2-phosphoglycerate (2-PG) into phosphoenolpyruvate (PEP). It is essential for the degradation of carbohydrates via glycolysis. The sequence is that of Enolase from Rhodococcus opacus (strain B4).